Reading from the N-terminus, the 581-residue chain is Intermediate filament protein ifa-3 (581 aa).

Residues 1-33 (MADPDSYRSSITSRPAFNRTVTSSTQNYGTPAS) are disordered. The head stretch occupies residues 1–74 (MADPDSYRSS…RDDREREKKE (74 aa)). The span at 7-33 (YRSSITSRPAFNRTVTSSTQNYGTPAS) shows a compositional bias: polar residues. The IF rod domain occupies 71–424 (EKKEITELND…RMLEGNSEEN (354 aa)). Residues 75–106 (ITELNDRLASYIGKVRFLAAQNRKLEADLNVL) are coil 1A. The interval 107–120 (QSRFGKSTGSVKIM) is linker 1. The interval 121-258 (YEMEITTATN…RGFETELKDL (138 aa)) is coil 1B. The linker 12 stretch occupies residues 259-276 (QAQAARDTTSENREYFKN). The segment at 277-424 (ELMNSIRDIR…RMLEGNSEEN (148 aa)) is coil 2. Positions 425–578 (GLRQLVEKVV…THMQRQSQQT (154 aa)) are tail. The 118-residue stretch at 457-574 (SRTSYQRSAK…EERATHMQRQ (118 aa)) folds into the LTD domain.

The protein belongs to the intermediate filament family. Forms some heteromeric filaments with ifb-1. As to expression, expressed in the embryonic and larval hypodermis. Also expressed in the ventral nerve cord of larvae.

The protein localises to the cytoplasm. Its function is as follows. Cytoplasmic intermediate filaments provide mechanical strength to cells. Essential protein, involved in attachment structures in epidermal cells that connect muscles to the external cuticle. Required for epidermal morphogenesis in embryos. Probable component of embryonic epidermal attachment structures. This chain is Intermediate filament protein ifa-3 (ifa-3), found in Caenorhabditis elegans.